The chain runs to 395 residues: 8-amino-7-oxononanoate synthase/2-amino-3-ketobutyrate coenzyme A ligase (395 aa).

Gly110–Phe111 serves as a coordination point for pyridoxal 5'-phosphate. A substrate-binding site is contributed by His135. Pyridoxal 5'-phosphate-binding positions include Ser182, Asp207–His210, and Thr239–Lys242. N6-(pyridoxal phosphate)lysine is present on Lys242. Residue Thr356 participates in substrate binding.

The protein belongs to the class-II pyridoxal-phosphate-dependent aminotransferase family. As to quaternary structure, homodimer. The cofactor is pyridoxal 5'-phosphate.

The catalysed reaction is 6-carboxyhexanoyl-[ACP] + L-alanine + H(+) = (8S)-8-amino-7-oxononanoate + holo-[ACP] + CO2. It catalyses the reaction glycine + acetyl-CoA = (2S)-2-amino-3-oxobutanoate + CoA. It functions in the pathway cofactor biosynthesis; biotin biosynthesis. Its function is as follows. Catalyzes the decarboxylative condensation of pimeloyl-[acyl-carrier protein] and L-alanine to produce 8-amino-7-oxononanoate (AON), [acyl-carrier protein], and carbon dioxide. Can also use pimeloyl-CoA instead of pimeloyl-ACP as substrate. It also converts 2-amino-3-ketobutyrate and CoA to glycine and acetyl-CoA. Activity is also observed with the following combinations of substrates: acetyl-CoA and either L-alanine or L-serine, pimeloyl-CoA and either glycine or L-serine, and palmitoyl-CoA with L-alanine. This is 8-amino-7-oxononanoate synthase/2-amino-3-ketobutyrate coenzyme A ligase from Thermus thermophilus (strain ATCC 27634 / DSM 579 / HB8).